We begin with the raw amino-acid sequence, 218 residues long: Putative glutamine transport system permease protein GlnP (218 aa).

The region spanning 19–208 (TLVTLKYSVI…ILVMLISFIA (190 aa)) is the ABC transmembrane type-1 domain. The next 4 membrane-spanning stretches (helical) occupy residues 25-45 (YSVI…ICKV), 57-79 (FYTS…FASP), 86-108 (FSVF…SEVI), and 187-207 (FFPM…ISFI).

The protein belongs to the binding-protein-dependent transport system permease family. HisMQ subfamily.

The protein resides in the cell inner membrane. Part of the binding-protein-dependent transport system for glutamine; probably responsible for the translocation of the substrate across the membrane. This chain is Putative glutamine transport system permease protein GlnP (glnP), found in Rickettsia felis (strain ATCC VR-1525 / URRWXCal2) (Rickettsia azadi).